The chain runs to 325 residues: Myo-inositol dehydrogenase Hyg17 (325 aa).

The protein belongs to the Gfo/Idh/MocA family.

It catalyses the reaction myo-inositol + NAD(+) = myo-inosose-5 + NADH + H(+). The protein operates within antibiotic biosynthesis. Its function is as follows. Dehydrogenase involved in the biosynthesis of the aminocyclitol moiety of hygromycin A, a broad-spectrum antibiotic. Catalyzes the NAD(+)-dependent oxidation of myo-inositol to myo-inosose-5 (neo-inosose). Shows reduced activity with scyllo-inositol, minimal activity with L-chiro-inositol and no activity with D-glucose, D-chiro-inositol, epi-inositol, muco-inositol and allo-inositol. Is specific for NAD(+) and cannot use NADP(+). This Streptomyces leeuwenhoekii protein is Myo-inositol dehydrogenase Hyg17.